The following is a 322-amino-acid chain: MTPANPKPLANHHIAVLLGGPSAEREVSLVTGAAYAAALERLGARVSRVDPGKDVAQVLTALAPDLVFNGLHGRWGEDGCVQGVLETLGLAYTHSGVLASALAMDKAKSKAVLAAAGIPVPGGGLFDRHDVAQGHVMPPPYVVKPNAEGSSVGVSLVFEGANGPPRQLAAPDWAFGEQVMVEPYIPGLELAVAVVGESNGPRALAVTEIRSSTGFYDYDAKYSQGGSIHVLPAPIPDAVRDRALHLAKLGHTALGCQGVTRSDFRYDDINDLLVLLEVNTQPGMTPTSLVPEQADHAGVSFDRLVFWIVEDAYARRFAGGIA.

Positions 110-310 (KAVLAAAGIP…FDRLVFWIVE (201 aa)) constitute an ATP-grasp domain. 137 to 191 (MPPPYVVKPNAEGSSVGVSLVFEGANGPPRQLAAPDWAFGEQVMVEPYIPGLELA) provides a ligand contact to ATP. The Mg(2+) site is built by Asp263, Glu277, and Asn279.

It belongs to the D-alanine--D-alanine ligase family. The cofactor is Mg(2+). Mn(2+) serves as cofactor.

The protein resides in the cytoplasm. The enzyme catalyses 2 D-alanine + ATP = D-alanyl-D-alanine + ADP + phosphate + H(+). It participates in cell wall biogenesis; peptidoglycan biosynthesis. Functionally, cell wall formation. In Caulobacter sp. (strain K31), this protein is D-alanine--D-alanine ligase.